We begin with the raw amino-acid sequence, 300 residues long: Probable endonuclease 4 (300 aa).

Zn(2+) is bound by residues histidine 68, histidine 109, glutamate 144, aspartate 178, histidine 181, histidine 213, aspartate 226, histidine 228, and glutamate 258.

Belongs to the AP endonuclease 2 family. It depends on Zn(2+) as a cofactor.

The enzyme catalyses Endonucleolytic cleavage to 5'-phosphooligonucleotide end-products.. In terms of biological role, endonuclease IV plays a role in DNA repair. It cleaves phosphodiester bonds at apurinic or apyrimidinic (AP) sites, generating a 3'-hydroxyl group and a 5'-terminal sugar phosphate. The polypeptide is Probable endonuclease 4 (Latilactobacillus sakei subsp. sakei (strain 23K) (Lactobacillus sakei subsp. sakei)).